The sequence spans 276 residues: MAIKKYKPTTNGLRNMSVSSFAEITTQTPEKSLLVPYKNQAGRNNQGKITVRHRGGGVKRKYRLIDFKRNKDNIIGKVATIEYDPNRSANIALIFYADGEKRYILAPKGLTVGTSIVSGPNSDIKVGNCLPLLNIPVGTTVHNIELKPGKGGQIARSSGASAQIISREDKYVLLRLQSSEVRKVLGSCRATIGEIGNEFYKLINYGKAGKKRFLGIRPTVRGSAMNPNDHPHGGGEGRAPIGRKSPMTPWGKKARGIKTRDRKKSSNELIIRRRTK.

The interval 221–276 is disordered; it reads RGSAMNPNDHPHGGGEGRAPIGRKSPMTPWGKKARGIKTRDRKKSSNELIIRRRTK. Basic residues predominate over residues 252-263; it reads KKARGIKTRDRK.

Belongs to the universal ribosomal protein uL2 family. As to quaternary structure, part of the 50S ribosomal subunit. Forms a bridge to the 30S subunit in the 70S ribosome.

In terms of biological role, one of the primary rRNA binding proteins. Required for association of the 30S and 50S subunits to form the 70S ribosome, for tRNA binding and peptide bond formation. It has been suggested to have peptidyltransferase activity; this is somewhat controversial. Makes several contacts with the 16S rRNA in the 70S ribosome. This Phytoplasma australiense protein is Large ribosomal subunit protein uL2.